Here is a 154-residue protein sequence, read N- to C-terminus: MSILTDFKNFISKGNVLGLGIAVIMGDAFNKIISSVTGDLLMPIIGAVFGGVDFSGFFIRLGAVPAGYTGSLTSYNDLKKAGVPLFGYGQFLTVVVNFVIVAFILFMIMKLAAKLQKELDKTEAKKEEKIAEAAPTPEDIVLLREIRDELRGKK.

Transmembrane regions (helical) follow at residues 16 to 36 (VLGL…ISSV), 39 to 59 (DLLM…GFFI), and 89 to 109 (GQFL…FMIM).

The protein belongs to the MscL family. In terms of assembly, homopentamer.

It is found in the cell inner membrane. Its function is as follows. Channel that opens in response to stretch forces in the membrane lipid bilayer. May participate in the regulation of osmotic pressure changes within the cell. The sequence is that of Large-conductance mechanosensitive channel from Zymomonas mobilis subsp. mobilis (strain ATCC 31821 / ZM4 / CP4).